Reading from the N-terminus, the 493-residue chain is Ketol-acid reductoisomerase (NADP(+)) (493 aa).

The 195-residue stretch at 14 to 208 (LDQLGRCRFM…GGDRAGVLES (195 aa)) folds into the KARI N-terminal Rossmann domain. NADP(+) is bound by residues 45-48 (CGAQ), Arg-68, Arg-76, Ser-78, and 108-110 (DKQ). Residue His-132 is part of the active site. Gly-158 lines the NADP(+) pocket. 2 consecutive KARI C-terminal knotted domains span residues 209–345 (SFVA…SPKA) and 346–486 (DGIK…MTDM). Residues Asp-217, Glu-221, Glu-390, and Glu-394 each coordinate Mg(2+). Ser-415 is a binding site for substrate.

The protein belongs to the ketol-acid reductoisomerase family. Mg(2+) is required as a cofactor.

It carries out the reaction (2R)-2,3-dihydroxy-3-methylbutanoate + NADP(+) = (2S)-2-acetolactate + NADPH + H(+). It catalyses the reaction (2R,3R)-2,3-dihydroxy-3-methylpentanoate + NADP(+) = (S)-2-ethyl-2-hydroxy-3-oxobutanoate + NADPH + H(+). The protein operates within amino-acid biosynthesis; L-isoleucine biosynthesis; L-isoleucine from 2-oxobutanoate: step 2/4. It participates in amino-acid biosynthesis; L-valine biosynthesis; L-valine from pyruvate: step 2/4. In terms of biological role, involved in the biosynthesis of branched-chain amino acids (BCAA). Catalyzes an alkyl-migration followed by a ketol-acid reduction of (S)-2-acetolactate (S2AL) to yield (R)-2,3-dihydroxy-isovalerate. In the isomerase reaction, S2AL is rearranged via a Mg-dependent methyl migration to produce 3-hydroxy-3-methyl-2-ketobutyrate (HMKB). In the reductase reaction, this 2-ketoacid undergoes a metal-dependent reduction by NADPH to yield (R)-2,3-dihydroxy-isovalerate. The sequence is that of Ketol-acid reductoisomerase (NADP(+)) from Actinobacillus pleuropneumoniae serotype 3 (strain JL03).